Reading from the N-terminus, the 148-residue chain is Snaclec 3 (148 aa).

The first 23 residues, M1 to A23, serve as a signal peptide directing secretion. Cystine bridges form between C27–C38, C55–C144, and C121–C136. The C-type lectin domain maps to Y34–K145.

It belongs to the snaclec family. As to quaternary structure, heterodimer; disulfide-linked.

It localises to the secreted. In terms of biological role, interferes with one step of hemostasis (modulation of platelet aggregation, or coagulation cascade, for example). The sequence is that of Snaclec 3 from Daboia siamensis (Eastern Russel's viper).